Consider the following 173-residue polypeptide: Zinc finger A20 and AN1 domain-containing stress-associated protein 2 (173 aa).

An A20-type zinc finger spans residues 12-46; that stretch reads PEGPKLCTNNCGFFGSAATMNMCSKCHKDMLFQQE. Zn(2+) contacts are provided by C18, C22, C34, C37, C114, C117, C128, C130, C135, H138, H144, and C146. An AN1-type zinc finger spans residues 108-154; sequence PKGPSRCTTCNKRVGLTGFKCRCGSLFCGTHRYADVHDCSFNYHAAA.

In terms of biological role, may be involved in environmental stress response. This is Zinc finger A20 and AN1 domain-containing stress-associated protein 2 (SAP2) from Arabidopsis thaliana (Mouse-ear cress).